A 318-amino-acid chain; its full sequence is Glycerol 2-dehydrogenase (NADP(+)) (318 aa).

Tyr-52 serves as the catalytic Proton donor. His-115 serves as a coordination point for substrate. 217–277 (SPLGSQNQVP…SSTPSRIESN (61 aa)) provides a ligand contact to NADP(+).

Belongs to the aldo/keto reductase family.

The catalysed reaction is glycerol + NADP(+) = dihydroxyacetone + NADPH + H(+). In terms of biological role, glycerol oxidoreductase probably involved in glycerol synthesis. The polypeptide is Glycerol 2-dehydrogenase (NADP(+)) (gld2) (Hypocrea jecorina (Trichoderma reesei)).